A 135-amino-acid chain; its full sequence is Large ribosomal subunit protein uL16 (135 aa).

It belongs to the universal ribosomal protein uL16 family. Part of the 50S ribosomal subunit.

Its function is as follows. Binds 23S rRNA and is also seen to make contacts with the A and possibly P site tRNAs. This is Large ribosomal subunit protein uL16 (rplP) from Carsonella ruddii (strain PV).